The sequence spans 392 residues: Cell division protein FtsZ (392 aa).

Residues glycine 24 to asparagine 28, glycine 111 to glycine 113, glutamate 142, arginine 145, and aspartate 189 each bind GTP.

It belongs to the FtsZ family. As to quaternary structure, homodimer. Polymerizes to form a dynamic ring structure in a strictly GTP-dependent manner. Interacts directly with several other division proteins.

It is found in the cytoplasm. In terms of biological role, essential cell division protein that forms a contractile ring structure (Z ring) at the future cell division site. The regulation of the ring assembly controls the timing and the location of cell division. One of the functions of the FtsZ ring is to recruit other cell division proteins to the septum to produce a new cell wall between the dividing cells. Binds GTP and shows GTPase activity. The chain is Cell division protein FtsZ from Neisseria gonorrhoeae.